A 260-amino-acid polypeptide reads, in one-letter code: MYFAVIGTHVRGKSASPAMHNASFKALGVNAVYIAVDVPREELPCFLKLARLNLRGFNVTIPHKEEVVKHLDGVAADARAIGAVNTVLVERNLLVGYNTDASAVYQLAGSHMRGADVLIVGAGGAARAALFAAIKAEARAVYIANRTYERAEALAREFAEKFKREVKAVRSPVKADVVVNATPVYDAMVADLSGASLYVDFAYIPTPRTKMVEEAQRLGIKVVDGVDLLVEQGAQAEKIWLGVEPDRTVMKRAVLEFLGI.

Shikimate is bound by residues 14–16 and Thr-60; that span reads SAS. Lys-64 functions as the Proton acceptor in the catalytic mechanism. Residues Asn-85 and Asp-100 each contribute to the shikimate site. NADP(+) is bound by residues 121–125, 145–150, and Phe-201; these read GAGGA and NRTYER. Residue Tyr-203 participates in shikimate binding. Residue Gly-225 coordinates NADP(+).

It belongs to the shikimate dehydrogenase family. Homodimer.

It catalyses the reaction shikimate + NADP(+) = 3-dehydroshikimate + NADPH + H(+). Its pathway is metabolic intermediate biosynthesis; chorismate biosynthesis; chorismate from D-erythrose 4-phosphate and phosphoenolpyruvate: step 4/7. Involved in the biosynthesis of the chorismate, which leads to the biosynthesis of aromatic amino acids. Catalyzes the reversible NADPH linked reduction of 3-dehydroshikimate (DHSA) to yield shikimate (SA). In Pyrobaculum neutrophilum (strain DSM 2338 / JCM 9278 / NBRC 100436 / V24Sta) (Thermoproteus neutrophilus), this protein is Shikimate dehydrogenase (NADP(+)).